A 98-amino-acid polypeptide reads, in one-letter code: Small ribosomal subunit protein uS19 (98 aa).

It belongs to the universal ribosomal protein uS19 family.

Its function is as follows. Protein S19 forms a complex with S13 that binds strongly to the 16S ribosomal RNA. The protein is Small ribosomal subunit protein uS19 of Chlorobaculum parvum (strain DSM 263 / NCIMB 8327) (Chlorobium vibrioforme subsp. thiosulfatophilum).